A 340-amino-acid polypeptide reads, in one-letter code: GTPase Obg (340 aa).

The Obg domain maps to 1-159 (MDFIDEVKLY…KYVVLKLKVL (159 aa)). Residues 160–329 (SDVGIIGMPN…LNEKLKKGSS (170 aa)) enclose the OBG-type G domain. Residues 166 to 173 (GMPNAGKS), 191 to 195 (FTTIK), 212 to 215 (DIPG), 279 to 282 (NKCD), and 310 to 312 (GED) contribute to the GTP site. The Mg(2+) site is built by Ser173 and Thr193.

It belongs to the TRAFAC class OBG-HflX-like GTPase superfamily. OBG GTPase family. Monomer. The cofactor is Mg(2+).

The protein resides in the cytoplasm. In terms of biological role, an essential GTPase which binds GTP, GDP and possibly (p)ppGpp with moderate affinity, with high nucleotide exchange rates and a fairly low GTP hydrolysis rate. Plays a role in control of the cell cycle, stress response, ribosome biogenesis and in those bacteria that undergo differentiation, in morphogenesis control. The chain is GTPase Obg from Wolbachia sp. subsp. Brugia malayi (strain TRS).